The sequence spans 136 residues: ATP synthase epsilon chain, chloroplastic (136 aa).

This sequence belongs to the ATPase epsilon chain family. As to quaternary structure, F-type ATPases have 2 components, CF(1) - the catalytic core - and CF(0) - the membrane proton channel. CF(1) has five subunits: alpha(3), beta(3), gamma(1), delta(1), epsilon(1). CF(0) has three main subunits: a, b and c.

The protein localises to the plastid. Its subcellular location is the chloroplast thylakoid membrane. In terms of biological role, produces ATP from ADP in the presence of a proton gradient across the membrane. The protein is ATP synthase epsilon chain, chloroplastic of Cucumis sativus (Cucumber).